The sequence spans 536 residues: Phosphoenolpyruvate carboxykinase (ATP) (536 aa).

Substrate contacts are provided by Arg63, Tyr203, and Lys209. ATP is bound by residues Lys209, His228, and 244–252; that span reads GLSGTGKTT. Residues Lys209 and His228 each coordinate Mn(2+). Mn(2+) is bound at residue Asp265. ATP is bound by residues Glu293, Arg329, 445–446, and Thr451; that span reads RI. Arg329 contacts substrate.

Belongs to the phosphoenolpyruvate carboxykinase (ATP) family. In terms of assembly, monomer. Requires Mn(2+) as cofactor.

It is found in the cytoplasm. The enzyme catalyses oxaloacetate + ATP = phosphoenolpyruvate + ADP + CO2. Its pathway is carbohydrate biosynthesis; gluconeogenesis. Involved in the gluconeogenesis. Catalyzes the conversion of oxaloacetate (OAA) to phosphoenolpyruvate (PEP) through direct phosphoryl transfer between the nucleoside triphosphate and OAA. The protein is Phosphoenolpyruvate carboxykinase (ATP) of Colwellia psychrerythraea (strain 34H / ATCC BAA-681) (Vibrio psychroerythus).